The following is a 144-amino-acid chain: Granulocyte-macrophage colony-stimulating factor (144 aa).

A signal peptide spans 1 to 17; sequence MWLQNLLFLGIVVYSFS. O-linked (GalNAc...) serine glycosylation occurs at serine 22. O-linked (GalNAc...) threonine glycosylation is present at threonine 27. 2 disulfide bridges follow: cysteine 71/cysteine 113 and cysteine 105/cysteine 138. N-linked (GlcNAc...) asparagine glycosylation is present at asparagine 86.

It belongs to the GM-CSF family. Monomer. The signaling GM-CSF receptor complex is a dodecamer of two head-to-head hexamers of two alpha, two beta, and two ligand subunits.

The protein resides in the secreted. Its function is as follows. Cytokine that stimulates the growth and differentiation of hematopoietic precursor cells from various lineages, including granulocytes, macrophages, eosinophils and erythrocytes. This chain is Granulocyte-macrophage colony-stimulating factor (Csf2), found in Rattus norvegicus (Rat).